A 305-amino-acid chain; its full sequence is MQRQELQQKKIAVLMGGLSAEREVSLRTGKAISQALTRCGYEVTDIDAGRDLAQQLEKTGVEVAFIALHGRFGEDGTVQGLLELADIPYTGSGVLASSLAMDKVATKKMLCYHGIATPGFAVMRRGQKICGTLPDYPLVVKPAREGSTIGISIVHDEQELAAGLEEAFRHDDLVLVEQFIAGAEVTVGVLDGQPLPIIQVVPKGGFYDYQSKYTPGQTEYLLPAPLPETLYGALQDSAVRVFEAIGCCGAARVDFMVTDTGFYCLEVNTIPGMTETSLLPKAANAVGMSFDELVERILAGASLRK.

In terms of domain architecture, ATP-grasp spans 107-299 (KKMLCYHGIA…FDELVERILA (193 aa)). 134–186 (PDYPLVVKPAREGSTIGISIVHDEQELAAGLEEAFRHDDLVLVEQFIAGAEVT) provides a ligand contact to ATP. Residues Asp254, Glu266, and Asn268 each coordinate Mg(2+).

The protein belongs to the D-alanine--D-alanine ligase family. Mg(2+) is required as a cofactor. Mn(2+) serves as cofactor.

Its subcellular location is the cytoplasm. The catalysed reaction is 2 D-alanine + ATP = D-alanyl-D-alanine + ADP + phosphate + H(+). It functions in the pathway cell wall biogenesis; peptidoglycan biosynthesis. Functionally, cell wall formation. The polypeptide is D-alanine--D-alanine ligase (Syntrophotalea carbinolica (strain DSM 2380 / NBRC 103641 / GraBd1) (Pelobacter carbinolicus)).